The sequence spans 222 residues: N-(5'-phosphoribosyl)anthranilate isomerase (222 aa).

It belongs to the TrpF family.

The catalysed reaction is N-(5-phospho-beta-D-ribosyl)anthranilate = 1-(2-carboxyphenylamino)-1-deoxy-D-ribulose 5-phosphate. It participates in amino-acid biosynthesis; L-tryptophan biosynthesis; L-tryptophan from chorismate: step 3/5. The polypeptide is N-(5'-phosphoribosyl)anthranilate isomerase (Rhizobium leguminosarum bv. trifolii (strain WSM2304)).